A 327-amino-acid polypeptide reads, in one-letter code: Acetyl-coenzyme A carboxylase carboxyl transferase subunit beta (327 aa).

The CoA carboxyltransferase N-terminal domain maps to 24–293; that stretch reads LWIKCPDTGQ…LTVTTAVEAP (270 aa). The span at 293–311 shows a compositional bias: low complexity; sequence PAEAAAKAEPEATTTEQPG. The disordered stretch occupies residues 293–327; the sequence is PAEAAAKAEPEATTTEQPGAPAPTEPPAQPAAPQA. Pro residues predominate over residues 312-327; sequence APAPTEPPAQPAAPQA.

It belongs to the AccD/PCCB family. Acetyl-CoA carboxylase is a heterohexamer composed of biotin carboxyl carrier protein (AccB), biotin carboxylase (AccC) and two subunits each of ACCase subunit alpha (AccA) and ACCase subunit beta (AccD).

Its subcellular location is the cytoplasm. The catalysed reaction is N(6)-carboxybiotinyl-L-lysyl-[protein] + acetyl-CoA = N(6)-biotinyl-L-lysyl-[protein] + malonyl-CoA. Its pathway is lipid metabolism; malonyl-CoA biosynthesis; malonyl-CoA from acetyl-CoA: step 1/1. In terms of biological role, component of the acetyl coenzyme A carboxylase (ACC) complex. Biotin carboxylase (BC) catalyzes the carboxylation of biotin on its carrier protein (BCCP) and then the CO(2) group is transferred by the transcarboxylase to acetyl-CoA to form malonyl-CoA. In Rhodopseudomonas palustris (strain ATCC BAA-98 / CGA009), this protein is Acetyl-coenzyme A carboxylase carboxyl transferase subunit beta.